The sequence spans 403 residues: Probable N-acetyltransferase HLS1 (403 aa).

Residues 2-177 (TVVREYDPTR…VNPVYAHRVN (176 aa)) enclose the N-acetyltransferase domain.

It belongs to the acetyltransferase family.

In terms of biological role, ethylene-responsive N-acetyltransferase required for differential cell elongation in the hypocotyl. Regulates apical hook formation of dark-grown seedlings. May control differential cell growth by regulating auxin activity. May be involved in negative feedback regulation of auxin homeostasis through the control of GH3-like genes. Modulates de novo shoot organogenesis. This chain is Probable N-acetyltransferase HLS1 (HLS1), found in Arabidopsis thaliana (Mouse-ear cress).